Consider the following 52-residue polypeptide: Keratin-associated protein 19-2 (52 aa).

It belongs to the KRTAP type 19 family. In terms of assembly, interacts with hair keratins.

Functionally, in the hair cortex, hair keratin intermediate filaments are embedded in an interfilamentous matrix, consisting of hair keratin-associated proteins (KRTAP), which are essential for the formation of a rigid and resistant hair shaft through their extensive disulfide bond cross-linking with abundant cysteine residues of hair keratins. The matrix proteins include the high-sulfur and high-glycine-tyrosine keratins. The sequence is that of Keratin-associated protein 19-2 (KRTAP19-2) from Homo sapiens (Human).